The chain runs to 491 residues: UDP-N-acetylmuramate--L-alanine ligase (491 aa).

126–132 (GTHGKTT) is an ATP binding site.

This sequence belongs to the MurCDEF family.

It is found in the cytoplasm. The catalysed reaction is UDP-N-acetyl-alpha-D-muramate + L-alanine + ATP = UDP-N-acetyl-alpha-D-muramoyl-L-alanine + ADP + phosphate + H(+). It participates in cell wall biogenesis; peptidoglycan biosynthesis. Cell wall formation. The chain is UDP-N-acetylmuramate--L-alanine ligase from Shigella flexneri serotype 5b (strain 8401).